Reading from the N-terminus, the 209-residue chain is Uracil phosphoribosyltransferase (209 aa).

5-phospho-alpha-D-ribose 1-diphosphate is bound by residues Arg-79, Arg-104, and Asp-131 to Ser-139. Residues Ile-194 and Gly-199–Ala-201 contribute to the uracil site. Asp-200 contributes to the 5-phospho-alpha-D-ribose 1-diphosphate binding site.

The protein belongs to the UPRTase family. The cofactor is Mg(2+).

It carries out the reaction UMP + diphosphate = 5-phospho-alpha-D-ribose 1-diphosphate + uracil. The protein operates within pyrimidine metabolism; UMP biosynthesis via salvage pathway; UMP from uracil: step 1/1. Allosterically activated by GTP. Functionally, catalyzes the conversion of uracil and 5-phospho-alpha-D-ribose 1-diphosphate (PRPP) to UMP and diphosphate. This Acidovorax ebreus (strain TPSY) (Diaphorobacter sp. (strain TPSY)) protein is Uracil phosphoribosyltransferase.